The following is a 140-amino-acid chain: Nucleoside diphosphate kinase (140 aa).

Residues lysine 11, phenylalanine 59, arginine 87, threonine 93, arginine 104, and asparagine 114 each contribute to the ATP site. Histidine 117 acts as the Pros-phosphohistidine intermediate in catalysis.

The protein belongs to the NDK family. As to quaternary structure, homotetramer. The cofactor is Mg(2+).

It is found in the cytoplasm. It catalyses the reaction a 2'-deoxyribonucleoside 5'-diphosphate + ATP = a 2'-deoxyribonucleoside 5'-triphosphate + ADP. The catalysed reaction is a ribonucleoside 5'-diphosphate + ATP = a ribonucleoside 5'-triphosphate + ADP. Functionally, major role in the synthesis of nucleoside triphosphates other than ATP. The ATP gamma phosphate is transferred to the NDP beta phosphate via a ping-pong mechanism, using a phosphorylated active-site intermediate. The protein is Nucleoside diphosphate kinase of Rickettsia felis (strain ATCC VR-1525 / URRWXCal2) (Rickettsia azadi).